A 385-amino-acid polypeptide reads, in one-letter code: MKKTLAALIVGAFAASAANAAVVYNNEGTNVELGGRLSIITEQSNSTVDDQEQQHGALRNAGSRFHIKATHNFGDGFYAQGYLETRLVSDYPESSSDHFGGITTKYAYVTLGNKAFGEVKLGRAKTIADGITSAEDKEYGVLNNKKYIPTNGNTVGYTYKGIDGLDGLVLGANYLLAQSRVPGGPSPFPRKQGEVYPQQISNGVQVGAKYDANNIIAGIAFGRTNYKTAGADFDPYGDFGLGRKEQVEGVLSTLGYRFSDLGLLVSLDSGYAKTKYYTTTDSSSGSQTITNPAYDEKRSFVSPGFQYELMEDTNVYGNFKYERTSVNQGKNTREQAVLFGVDHKLHKQVLTYIEGAYARTKTNDKGKTEKTGKEKSVGVGLRVYF.

A signal peptide spans 1 to 20 (MKKTLAALIVGAFAASAANA).

It belongs to the Gram-negative porin family. In terms of assembly, homotrimer.

The protein localises to the cell outer membrane. Forms pores that allow passive diffusion of small molecules across the outer membrane. The chain is Outer membrane protein P2 (ompP2) from Haemophilus influenzae.